Consider the following 470-residue polypeptide: Tubulin gamma chain (470 aa).

144–150 (AGGTGSG) provides a ligand contact to GTP.

This sequence belongs to the tubulin family.

It is found in the cytoplasm. The protein localises to the cytoskeleton. It localises to the microtubule organizing center. Its subcellular location is the spindle pole body. Its function is as follows. Tubulin is the major constituent of microtubules. The gamma chain is found at microtubule organizing centers (MTOC) such as the spindle poles or the centrosome, suggesting that it is involved in the minus-end nucleation of microtubule assembly. The protein is Tubulin gamma chain (TUB4) of Eremothecium gossypii (strain ATCC 10895 / CBS 109.51 / FGSC 9923 / NRRL Y-1056) (Yeast).